The sequence spans 241 residues: DnaA regulatory inactivator Hda (241 aa).

This sequence belongs to the DnaA family. HdA subfamily. As to quaternary structure, the active form seems to be an ADP-bound monomer. Forms the RIDA complex (regulatory inactivation of DnaA) of ATP-DnaA, ADP-Hda and the DNA-loaded beta sliding clamp (dnaN).

In terms of biological role, mediates the interaction of DNA replication initiator protein DnaA with DNA polymerase subunit beta sliding clamp (dnaN). Stimulates hydrolysis of ATP-DnaA to ADP-DnaA, rendering DnaA inactive for reinitiation, a process called regulatory inhibition of DnaA or RIDA. The chain is DnaA regulatory inactivator Hda from Salmonella agona (strain SL483).